A 496-amino-acid polypeptide reads, in one-letter code: MTIHIKNNVNWVGQRDWEVSDFHGTEFKMTKGTSYNSYLIQEEKTVLIDTVDHRFSHQFIQNLEMEIDLASIDYIVINHAEEDHSGALAALMEKIPGTPIYCTENAIDSIVGHHHHPEWNFNPIKTGDALDIGNGKQLIFVEAPMLHWPDSMMTYLTGDAILFSNDAFGQHYCDERLFNDEVDQTELMDQCLRYYANILTPFSALVTAKIKEVLSFNLPVDMIATSHGCVWRDNPTQIIHQYLEWADNYQEDRITIFYDSMSNNTRMMADAIAQGIHDVDPAVAVKVFNVSRQDKNDILTSVFRSKGILVGSSTMNNVMMPKIAGMLEEIAGLRFRAKKAGAFGSYGWNGGAVDRIHSRLTDAGFETAVGLKAKWRPDGQAMKLCREHGQFIAKQWALAPLTTTFNTINVDKKIQTIEEPVVLVEPSAELEKPATEVTSSKDAKQCMLCSVCNWVYDPEIGEPNQGVEPNTPWSSVPNDFLCPECHLGKDVFVEIK.

Positions 30–210 (TKGTSYNSYL…PFSALVTAKI (181 aa)) are zinc metallo-hydrolase. Residues H79, E81, D83, H147, D166, and H227 each coordinate Fe cation. The 140-residue stretch at 254–393 (ITIFYDSMSN…LCREHGQFIA (140 aa)) folds into the Flavodoxin-like domain. Residues 260–264 (SMSNN) and 342–369 (AFGS…ETAV) each bind FMN. A Rubredoxin-like domain is found at 444–495 (KQCMLCSVCNWVYDPEIGEPNQGVEPNTPWSSVPNDFLCPECHLGKDVFVEI). C449, C452, C482, and C485 together coordinate Fe cation.

In the N-terminal section; belongs to the zinc metallo-hydrolase group 3 family. As to quaternary structure, homotetramer. It depends on Fe cation as a cofactor. The cofactor is FMN.

It is found in the cytoplasm. It functions in the pathway nitrogen metabolism; nitric oxide reduction. Anaerobic nitric oxide reductase; uses NADH to detoxify nitric oxide (NO), protecting several 4Fe-4S NO-sensitive enzymes. Has at least 2 reductase partners, only one of which (NorW, flavorubredoxin reductase) has been identified. NO probably binds to the di-iron center; electrons enter from the NorW at rubredoxin and are transferred sequentially to the FMN center and the di-iron center. Also able to function as an aerobic oxygen reductase. In Aliivibrio fischeri (strain ATCC 700601 / ES114) (Vibrio fischeri), this protein is Anaerobic nitric oxide reductase flavorubredoxin.